A 997-amino-acid chain; its full sequence is Kinesin-like protein KIF19 (997 aa).

In terms of domain architecture, Kinesin motor spans 11-346 (QLTVALRIRP…LTYADRAKNI (336 aa)). ATP is bound at residue 104 to 111 (GPTGCGKT). Positions 360–437 (HIAQYTSIIS…REQMDIRRQL (78 aa)) form a coiled coil. Residues 468-491 (RARKWRDEHRKETYGKDDSEKDSD) show a composition bias toward basic and acidic residues. The segment at 468-503 (RARKWRDEHRKETYGKDDSEKDSDTGDDQSDFIEPP) is disordered. Residues 508 to 577 (ARETIQILEG…ELEIENTEMQ (70 aa)) are a coiled coil. Disordered stretches follow at residues 662-690 (NLTA…RNPI), 792-811 (GDRL…SMSE), and 848-890 (GGGS…SRSF). Basic and acidic residues-rich tracts occupy residues 792-802 (GDRLQPMKERS) and 869-880 (QKLEKREESLEV). Residues 861-889 (HRTQKKQAQKLEKREESLEVKRRKKRSRS) adopt a coiled-coil conformation.

This sequence belongs to the TRAFAC class myosin-kinesin ATPase superfamily. Kinesin family.

Its subcellular location is the cytoplasm. The protein localises to the cytoskeleton. It is found in the cell projection. It localises to the cilium. Functionally, plus end-directed microtubule-dependent motor protein that regulates the length of motile cilia by mediating depolymerization of microtubules at ciliary tips. The protein is Kinesin-like protein KIF19 (kif19) of Xenopus laevis (African clawed frog).